The primary structure comprises 135 residues: ATP synthase epsilon chain (135 aa).

It belongs to the ATPase epsilon chain family. As to quaternary structure, F-type ATPases have 2 components, CF(1) - the catalytic core - and CF(0) - the membrane proton channel. CF(1) has five subunits: alpha(3), beta(3), gamma(1), delta(1), epsilon(1). CF(0) has three main subunits: a, b and c.

It localises to the cellular thylakoid membrane. Functionally, produces ATP from ADP in the presence of a proton gradient across the membrane. The chain is ATP synthase epsilon chain from Prochlorococcus marinus (strain NATL1A).